Here is a 351-residue protein sequence, read N- to C-terminus: MTNQNDNFLVLKNINKTFGKSVVIDDLDLVIKRGTMVTLLGPSGCGKTTILRLVAGLENPTSGQIFIDGEDVTKSSIQNRDICIVFQSYALFPHMSIGDNVGYGLRMQNIAKEERKQRIREALELVDLAGFEDRFVDQISGGQQQRVALARALVLKPKVLLFDEPLSNLDANLRRSMREKIRELQQSLSITSLYVTHDQTEAFAVSDEVIVMNKGKIVQKAPAKELYQQPNSLFLANFMGESSIFNGQLQGNQVTLNGYQFTLPNAQQFNLPNGDCLVGIRPEAVTLKETGEPSQQCSIKTAVYMGNHWEIVADWAGQDLLINANPEVFNPEQKQAYVHLSSHGVFLLKKE.

Positions 9–239 (LVLKNINKTF…PNSLFLANFM (231 aa)) constitute an ABC transporter domain. An ATP-binding site is contributed by 41 to 48 (GPSGCGKT).

Belongs to the ABC transporter superfamily. Fe(3+) ion importer (TC 3.A.1.10) family. As to quaternary structure, the complex is composed of two ATP-binding proteins (FbpC), two transmembrane proteins (FbpB) and a solute-binding protein (FbpA).

It is found in the cell inner membrane. It catalyses the reaction Fe(3+)(out) + ATP + H2O = Fe(3+)(in) + ADP + phosphate + H(+). Functionally, part of the ABC transporter complex FbpABC involved in Fe(3+) ions import. Responsible for energy coupling to the transport system. The protein is Fe(3+) ions import ATP-binding protein FbpC of Mannheimia succiniciproducens (strain KCTC 0769BP / MBEL55E).